Consider the following 72-residue polypeptide: UPF0346 protein GK1571 (72 aa).

Belongs to the UPF0346 family.

The polypeptide is UPF0346 protein GK1571 (Geobacillus kaustophilus (strain HTA426)).